The following is a 138-amino-acid chain: Translation initiation factor 2 subunit beta (138 aa).

The protein belongs to the eIF-2-beta/eIF-5 family. Heterotrimer composed of an alpha, a beta and a gamma chain.

EIF-2 functions in the early steps of protein synthesis by forming a ternary complex with GTP and initiator tRNA. The sequence is that of Translation initiation factor 2 subunit beta from Methanococcus vannielii (strain ATCC 35089 / DSM 1224 / JCM 13029 / OCM 148 / SB).